The chain runs to 516 residues: Protein indeterminate-domain 4, chloroplastic (516 aa).

Positions 1-26 (MSSSSYNTSVIPSSSSSAQPFFITSS) are enriched in low complexity. A disordered region spans residues 1 to 68 (MSSSSYNTSV…QPGNPNPDAE (68 aa)). The transit peptide at 1-70 (MSSSSYNTSV…GNPNPDAEVV (70 aa)) directs the protein to the chloroplast. Residue Ser73 is modified to Phosphoserine. 2 consecutive C2H2-type zinc fingers follow at residues 83 to 105 (FICD…RRGH) and 124 to 154 (YLCP…YRKH). The Nuclear localization signal signature appears at 146-153 (IKKHYYRK). Residues 159-182 (WKCEKCSKRYAVQSDWKAHSKTCG) form a C2H2-type 2; degenerate zinc finger. Residues Cys161, Cys164, His177, Cys181, Cys188, Cys190, His203, and Cys207 each contribute to the Zn(2+) site. The segment at 186–209 (YRCDCGTIFSRRDSYITHRAFCDA) adopts a CCHC-type 2; atypical zinc-finger fold. The segment at 196 to 208 (RRDSYITHRAFCD) is SHR-binding. Residues 483 to 516 (NRGGGGGGRGSARGGVSLDGEAKFPEQNYPFGRG) are disordered. The segment covering 484 to 495 (RGGGGGGRGSAR) has biased composition (gly residues).

As to quaternary structure, binds to RGA and SCL3 competitively in the nucleus.

It localises to the plastid. The protein resides in the chloroplast. Its subcellular location is the nucleus. Functionally, transcription factor that may act a transcriptional activator of nuclear-encoded photosynthetic gene expression. Binds DNA via its zinc fingers. Recognizes and binds to SCL3 promoter sequence 5'-AGACAA-3' to promote its expression when in complex with RGA. The sequence is that of Protein indeterminate-domain 4, chloroplastic from Arabidopsis thaliana (Mouse-ear cress).